The sequence spans 196 residues: Large ribosomal subunit protein uL5 (196 aa).

The protein belongs to the universal ribosomal protein uL5 family. As to quaternary structure, part of the 50S ribosomal subunit; part of the 5S rRNA/L5/L18/L25 subcomplex. Contacts the 5S rRNA and the P site tRNA. Forms a bridge to the 30S subunit in the 70S ribosome.

This is one of the proteins that bind and probably mediate the attachment of the 5S RNA into the large ribosomal subunit, where it forms part of the central protuberance. In the 70S ribosome it contacts protein S13 of the 30S subunit (bridge B1b), connecting the 2 subunits; this bridge is implicated in subunit movement. Contacts the P site tRNA; the 5S rRNA and some of its associated proteins might help stabilize positioning of ribosome-bound tRNAs. This Chlorobium phaeobacteroides (strain BS1) protein is Large ribosomal subunit protein uL5.